The sequence spans 303 residues: tRNA-cytidine(32) 2-sulfurtransferase (303 aa).

The short motif at serine 49–serine 54 is the PP-loop motif element. [4Fe-4S] cluster-binding residues include cysteine 124, cysteine 127, and cysteine 215.

This sequence belongs to the TtcA family. As to quaternary structure, homodimer. Mg(2+) serves as cofactor. It depends on [4Fe-4S] cluster as a cofactor.

The protein resides in the cytoplasm. The enzyme catalyses cytidine(32) in tRNA + S-sulfanyl-L-cysteinyl-[cysteine desulfurase] + AH2 + ATP = 2-thiocytidine(32) in tRNA + L-cysteinyl-[cysteine desulfurase] + A + AMP + diphosphate + H(+). The protein operates within tRNA modification. Catalyzes the ATP-dependent 2-thiolation of cytidine in position 32 of tRNA, to form 2-thiocytidine (s(2)C32). The sulfur atoms are provided by the cysteine/cysteine desulfurase (IscS) system. This Anaeromyxobacter sp. (strain Fw109-5) protein is tRNA-cytidine(32) 2-sulfurtransferase.